The primary structure comprises 374 residues: tRNA-specific 2-thiouridylase MnmA (374 aa).

ATP-binding positions include Gly13–Ser20 and Met39. The segment at Asn99–Asp101 is interaction with target base in tRNA. Cys104 serves as the catalytic Nucleophile. Cys104 and Cys201 are oxidised to a cystine. Residue Gly128 coordinates ATP. An interaction with tRNA region spans residues Lys151–Gln153. Cys201 functions as the Cysteine persulfide intermediate in the catalytic mechanism. The segment at Arg313–Tyr314 is interaction with tRNA.

It belongs to the MnmA/TRMU family.

The protein resides in the cytoplasm. It catalyses the reaction S-sulfanyl-L-cysteinyl-[protein] + uridine(34) in tRNA + AH2 + ATP = 2-thiouridine(34) in tRNA + L-cysteinyl-[protein] + A + AMP + diphosphate + H(+). Its function is as follows. Catalyzes the 2-thiolation of uridine at the wobble position (U34) of tRNA, leading to the formation of s(2)U34. The polypeptide is tRNA-specific 2-thiouridylase MnmA (Streptococcus equi subsp. equi (strain 4047)).